The primary structure comprises 213 residues: Cell division protein SepF 2 (213 aa).

The interval 16-63 (EDDGYDGRGFDPDDDFEPELDPEPERDRRRHEPPHQSHQALHPQRDES) is disordered. A compositionally biased stretch (acidic residues) spans 27–39 (PDDDFEPELDPEP).

The protein belongs to the SepF family. As to quaternary structure, homodimer. Interacts with FtsZ.

The protein resides in the cytoplasm. In terms of biological role, cell division protein that is part of the divisome complex and is recruited early to the Z-ring. Probably stimulates Z-ring formation, perhaps through the cross-linking of FtsZ protofilaments. Its function overlaps with FtsA. This Streptomyces avermitilis (strain ATCC 31267 / DSM 46492 / JCM 5070 / NBRC 14893 / NCIMB 12804 / NRRL 8165 / MA-4680) protein is Cell division protein SepF 2.